A 136-amino-acid polypeptide reads, in one-letter code: Small ribosomal subunit protein uS19 (136 aa).

The interval 114 to 136 (RSRVSHGSAGVGATRSSKFVPLK) is disordered.

It belongs to the universal ribosomal protein uS19 family.

Functionally, protein S19 forms a complex with S13 that binds strongly to the 16S ribosomal RNA. The sequence is that of Small ribosomal subunit protein uS19 from Methanosarcina barkeri (strain Fusaro / DSM 804).